Consider the following 342-residue polypeptide: C-X-C chemokine receptor type 6 (342 aa).

Residues 1 to 32 (MAEHDYHEDYGFNSFNDSSQEEHQDFLQFSKV) lie on the Extracellular side of the membrane. The N-linked (GlcNAc...) asparagine glycan is linked to asparagine 16. The helical transmembrane segment at 33 to 59 (FLPCMYLVVFVCGLVGNSLVLVISIFY) threads the bilayer. Residues 60–68 (HKLQSLTDV) lie on the Cytoplasmic side of the membrane. A helical transmembrane segment spans residues 69-89 (FLVNLPLADLVFVCTLPFWAY). Over 90 to 103 (AGIHEWVFGQVMCK) the chain is Extracellular. An intrachain disulfide couples cysteine 102 to cysteine 180. The helical transmembrane segment at 104 to 125 (SLLGIYTINFYTSMLILTCITV) threads the bilayer. Topologically, residues 126–143 (DRFIVVVKATKAYNQQAK) are cytoplasmic. The chain crosses the membrane as a helical span at residues 144–164 (RMTWGKVTSLLIWVISLLVSL). The Extracellular segment spans residues 165 to 187 (PQIIYGNVFNLDKLICGYHDEAI). A helical membrane pass occupies residues 188–215 (STVVLATQMTLGFFLPLLTMIVCYSVII). The Cytoplasmic portion of the chain corresponds to 216-231 (KTLLHAGGFQKHRSLK). Residues 232-259 (IIFLVMAVFLLTQMPFNLMKLIRSTHWE) traverse the membrane as a helical segment. At 260–275 (YYAMTSFHYTIMVTEA) the chain is on the extracellular side. Residues 276-293 (IAYLRACLNPVLYAFVSL) form a helical membrane-spanning segment. Residues 294 to 342 (KFRKNFWKLVKDIGCLPYLGVSHQWKSSEDNSKTFSASHNVEATSMFQL) lie on the Cytoplasmic side of the membrane.

This sequence belongs to the G-protein coupled receptor 1 family.

It localises to the cell membrane. Receptor for the C-X-C chemokine CXCL16. Used as a coreceptor by SIVs and by strains of HIV-2 and m-tropic HIV-1. The chain is C-X-C chemokine receptor type 6 (CXCR6) from Pan troglodytes (Chimpanzee).